Here is a 210-residue protein sequence, read N- to C-terminus: ATP-dependent Clp protease proteolytic subunit 1 (210 aa).

Ser106 (nucleophile) is an active-site residue. His131 is a catalytic residue.

It belongs to the peptidase S14 family. In terms of assembly, fourteen ClpP subunits assemble into 2 heptameric rings which stack back to back to give a disk-like structure with a central cavity, resembling the structure of eukaryotic proteasomes.

It localises to the cytoplasm. It catalyses the reaction Hydrolysis of proteins to small peptides in the presence of ATP and magnesium. alpha-casein is the usual test substrate. In the absence of ATP, only oligopeptides shorter than five residues are hydrolyzed (such as succinyl-Leu-Tyr-|-NHMec, and Leu-Tyr-Leu-|-Tyr-Trp, in which cleavage of the -Tyr-|-Leu- and -Tyr-|-Trp bonds also occurs).. In terms of biological role, cleaves peptides in various proteins in a process that requires ATP hydrolysis. Has a chymotrypsin-like activity. Plays a major role in the degradation of misfolded proteins. This is ATP-dependent Clp protease proteolytic subunit 1 from Chelativorans sp. (strain BNC1).